Here is a 296-residue protein sequence, read N- to C-terminus: Polyamine aminopropyltransferase (296 aa).

The PABS domain occupies 5 to 238; the sequence is ELWYETLHAN…GIMTFAWATQ (234 aa). Gln33 contacts S-methyl-5'-thioadenosine. The spermidine site is built by His64 and Asp88. S-methyl-5'-thioadenosine is bound by residues Glu108 and 140–141; that span reads DG. Asp158 serves as the catalytic Proton acceptor. 158 to 161 lines the spermidine pocket; sequence DCTD. Pro165 serves as a coordination point for S-methyl-5'-thioadenosine.

It belongs to the spermidine/spermine synthase family. As to quaternary structure, homodimer or homotetramer.

The protein resides in the cytoplasm. It carries out the reaction S-adenosyl 3-(methylsulfanyl)propylamine + putrescine = S-methyl-5'-thioadenosine + spermidine + H(+). It functions in the pathway amine and polyamine biosynthesis; spermidine biosynthesis; spermidine from putrescine: step 1/1. Its function is as follows. Catalyzes the irreversible transfer of a propylamine group from the amino donor S-adenosylmethioninamine (decarboxy-AdoMet) to putrescine (1,4-diaminobutane) to yield spermidine. The chain is Polyamine aminopropyltransferase from Yersinia pseudotuberculosis serotype O:1b (strain IP 31758).